Consider the following 152-residue polypeptide: uncharacterized protein (152 aa).

The protein resides in the mitochondrion. This is an uncharacterized protein from Arabidopsis thaliana (Mouse-ear cress).